The sequence spans 990 residues: MIFSAITADLDNTALAARFGAGPRLYDPVLAAERWAGWLADLAPEQADAIAALGNAFPDLQIALQSIAEASPYLFDLIRGDPVRLLRVLRGAPEQRLAKLLEDAETFVAAASAEDEVMAALRRLKAEAALLIALCDIGGIWPVMQVTQALTDLAGRSVQMALRFLLRQEAGRGRIVPPNPDCPEQGSGLIVLAMGKMGAGELNYSSDIDLIVFYELDAPTLAPDIEPQPFFVRVTQGLSRILQQRRGDGYVFRVDLRLRPDPASTPVALSTVSALDYYEREGRTWERAAMIKARPCAGDLVAGDALLSEIAPFVWRKHLDFAALSDVHDMKRQMQTYRGQTEIAVEGHNVKVGRGGIREIEFFAQTQQLIAGGRHPELRVRPTLEALEILAARNWITLQARDELTEAYLFLRKVEHRVQMIADEQTHALPDTVEAIEQFSRFLGYDSRDSFARDLLGYLERVQGHYAKLFEGDPTGTAKLPPVDYGAGPEDTRLLDHLLSLGYKKPLMIATTLQQWMTGGYRVLKVETTQRAFREFVPALIEELARAEQPDDAVNAFDRLLQALHRGGRLISLLSQNRELLTLVALVLGAAPRLGDMLARQPQILDGLIDPRFFGAMPDQAELSARLAVTLADAGSYEEFLDRLRLFGQESLFLIGTRILSGTVPTQQAAVAFADVAEGIVGTVHGLVSEQFASTYGRVKGQQTAILAMGKLGSREMTASSDLDLILIYDFDDDQPDSDGERSLHGAQYFARFTQRLISAFTTRTNYGVLYDVDMRLRPSGRAGPVASRLDAFAAYQEQEAWTWEHLALTRARVISAPPEFRSRIEQVIRAVLTRQRDAAIIANDVAEMRRAIAQEKGEDDVWDLKYAAGGMVDIDFIAQYLQLVHAHEAPDILHVNTLSALDNATRLGLLAQADAEVLRPAARLYQNLTQILRLCVSEKFNPDTAGDDLLRVMVRAGDAPDFSSLQARVKETQSDVRAIFSRLIGGEDA.

The interval methionine 1–proline 474 is adenylyl removase. The tract at residues alanine 478 to alanine 990 is adenylyl transferase.

The protein belongs to the GlnE family. Requires Mg(2+) as cofactor.

The enzyme catalyses [glutamine synthetase]-O(4)-(5'-adenylyl)-L-tyrosine + phosphate = [glutamine synthetase]-L-tyrosine + ADP. It catalyses the reaction [glutamine synthetase]-L-tyrosine + ATP = [glutamine synthetase]-O(4)-(5'-adenylyl)-L-tyrosine + diphosphate. Its function is as follows. Involved in the regulation of glutamine synthetase GlnA, a key enzyme in the process to assimilate ammonia. When cellular nitrogen levels are high, the C-terminal adenylyl transferase (AT) inactivates GlnA by covalent transfer of an adenylyl group from ATP to specific tyrosine residue of GlnA, thus reducing its activity. Conversely, when nitrogen levels are low, the N-terminal adenylyl removase (AR) activates GlnA by removing the adenylyl group by phosphorolysis, increasing its activity. The regulatory region of GlnE binds the signal transduction protein PII (GlnB) which indicates the nitrogen status of the cell. In Rhodopseudomonas palustris (strain ATCC BAA-98 / CGA009), this protein is Bifunctional glutamine synthetase adenylyltransferase/adenylyl-removing enzyme.